The sequence spans 289 residues: D-psicose 3-epimerase (289 aa).

Substrate contacts are provided by tyrosine 6 and alanine 107. Catalysis depends on glutamate 150, which acts as the Proton donor/acceptor. Residue glutamate 150 coordinates Mn(2+). Substrate-binding positions include glutamate 156 and 183-186 (DTFH). Residues aspartate 183 and histidine 209 each contribute to the Mn(2+) site. Arginine 215 is a substrate binding site. Glutamate 244 serves as the catalytic Proton donor/acceptor. Residue glutamate 244 coordinates Mn(2+).

This sequence belongs to the hyi family. In terms of assembly, homotetramer. Mn(2+) is required as a cofactor. Requires Co(2+) as cofactor.

The catalysed reaction is D-allulose = keto-D-fructose. Inhibited by Zn(2+) and Cu(2+). Involved in the biosynthesis of D-psicose. Catalyzes the reversible epimerization of D-fructose at the C3 position to yield D-psicose. The enzyme is highly specific for D-psicose and shows very low activity with D-tagatose. The substrate specificity decreases in the following order: D-fructose, D-tagatose, D-ribulose, D-xylulose, and D-sorbose. It shows a higher level of activity for cis ketoses than for trans-ketoses. This chain is D-psicose 3-epimerase (dpe), found in Agrobacterium fabrum (strain C58 / ATCC 33970) (Agrobacterium tumefaciens (strain C58)).